A 324-amino-acid polypeptide reads, in one-letter code: Phospho-N-acetylmuramoyl-pentapeptide-transferase (324 aa).

10 helical membrane-spanning segments follow: residues 9 to 29 (TFAV…PFLV), 53 to 73 (TMGA…FSFI), 77 to 97 (VSAA…LGFL), 117 to 137 (FLGQ…NDFA), 147 to 167 (IEVD…VGFS), 176 to 196 (LDGL…VIAF), 201 to 221 (MDVA…LLFN), 227 to 247 (IFMG…ISIL), 253 to 273 (LLLL…LQVF), and 304 to 324 (VLTF…VVIF).

This sequence belongs to the glycosyltransferase 4 family. MraY subfamily. It depends on Mg(2+) as a cofactor.

It localises to the cell membrane. The enzyme catalyses UDP-N-acetyl-alpha-D-muramoyl-L-alanyl-gamma-D-glutamyl-meso-2,6-diaminopimeloyl-D-alanyl-D-alanine + di-trans,octa-cis-undecaprenyl phosphate = di-trans,octa-cis-undecaprenyl diphospho-N-acetyl-alpha-D-muramoyl-L-alanyl-D-glutamyl-meso-2,6-diaminopimeloyl-D-alanyl-D-alanine + UMP. It functions in the pathway cell wall biogenesis; peptidoglycan biosynthesis. Functionally, catalyzes the initial step of the lipid cycle reactions in the biosynthesis of the cell wall peptidoglycan: transfers peptidoglycan precursor phospho-MurNAc-pentapeptide from UDP-MurNAc-pentapeptide onto the lipid carrier undecaprenyl phosphate, yielding undecaprenyl-pyrophosphoryl-MurNAc-pentapeptide, known as lipid I. This chain is Phospho-N-acetylmuramoyl-pentapeptide-transferase, found in Listeria monocytogenes serovar 1/2a (strain ATCC BAA-679 / EGD-e).